We begin with the raw amino-acid sequence, 452 residues long: UDP-N-acetylmuramoylalanine--D-glutamate ligase (452 aa).

119 to 125 (GSNGKTT) provides a ligand contact to ATP.

Belongs to the MurCDEF family.

It is found in the cytoplasm. The enzyme catalyses UDP-N-acetyl-alpha-D-muramoyl-L-alanine + D-glutamate + ATP = UDP-N-acetyl-alpha-D-muramoyl-L-alanyl-D-glutamate + ADP + phosphate + H(+). It functions in the pathway cell wall biogenesis; peptidoglycan biosynthesis. In terms of biological role, cell wall formation. Catalyzes the addition of glutamate to the nucleotide precursor UDP-N-acetylmuramoyl-L-alanine (UMA). This chain is UDP-N-acetylmuramoylalanine--D-glutamate ligase, found in Streptococcus pyogenes serotype M28 (strain MGAS6180).